The sequence spans 420 residues: Pre-mRNA-splicing factor RBM22 (420 aa).

N-acetylalanine is present on alanine 2. 2 positions are modified to phosphoserine: serine 4 and serine 102. Residues lysine 139 and lysine 149 each participate in a glycyl lysine isopeptide (Lys-Gly) (interchain with G-Cter in SUMO2) cross-link. The C3H1-type zinc finger occupies 159-186; that stretch reads RNRPHICSFWVKGECKRGEECPYRHEKP. Position 212 is an N6-acetyllysine (lysine 212). An RRM domain is found at 232 to 305; it reads TTLYVGGLGD…RRLNVKWGRS (74 aa). A Glycyl lysine isopeptide (Lys-Gly) (interchain with G-Cter in SUMO2) cross-link involves residue lysine 290. Disordered regions lie at residues 303 to 343 and 372 to 420; these read GRSQ…AAEE and APPP…HSSP. Basic and acidic residues predominate over residues 309 to 318; it reads RGKEKEKDGT.

The protein belongs to the SLT11 family. As to quaternary structure, component of the pre-catalytic and catalytic spliceosome complexes. Component of the postcatalytic spliceosome P complex. Interacts with PDCD6; the interaction induces translocation of PDCD6 in the cytoplasm. Interacts with PPIL1.

Its subcellular location is the nucleus. It is found in the cytoplasm. In terms of biological role, required for pre-mRNA splicing as component of the activated spliceosome. Involved in the first step of pre-mRNA splicing. Binds directly to the internal stem-loop (ISL) domain of the U6 snRNA and to the pre-mRNA intron near the 5' splice site during the activation and catalytic phases of the spliceosome cycle. Involved in both translocations of the nuclear SLU7 to the cytoplasm and the cytosolic calcium-binding protein PDCD6 to the nucleus upon cellular stress responses. In Homo sapiens (Human), this protein is Pre-mRNA-splicing factor RBM22 (RBM22).